The sequence spans 733 residues: Methionine--tRNA ligase (733 aa).

The 'HIGH' region motif lies at 11-21 (PYANGPIHAGH). Positions 143, 146, 156, and 159 each coordinate Zn(2+). The 'KMSKS' region motif lies at 345-349 (KFSTS). An ATP-binding site is contributed by Thr-348. The region spanning 633-733 (DFMKLDLRVG…KEVKLGARIR (101 aa)) is the tRNA-binding domain.

The protein belongs to the class-I aminoacyl-tRNA synthetase family. MetG type 1 subfamily. As to quaternary structure, homodimer. Zn(2+) serves as cofactor.

Its subcellular location is the cytoplasm. The enzyme catalyses tRNA(Met) + L-methionine + ATP = L-methionyl-tRNA(Met) + AMP + diphosphate. Is required not only for elongation of protein synthesis but also for the initiation of all mRNA translation through initiator tRNA(fMet) aminoacylation. The protein is Methionine--tRNA ligase of Thermococcus onnurineus (strain NA1).